Reading from the N-terminus, the 121-residue chain is Putative ankyrin repeat protein L215 (121 aa).

ANK repeat units lie at residues 10–40 and 42–71; these read QYDSILMYAASNGYDKIVKLILDKVGTSFKE and IHETILLWAFQNEHYETIQLLIDHGFNKLV.

The protein is Putative ankyrin repeat protein L215 of Acanthamoeba polyphaga mimivirus (APMV).